Here is a 141-residue protein sequence, read N- to C-terminus: Large ribosomal subunit protein uL11 (141 aa).

This sequence belongs to the universal ribosomal protein uL11 family. Part of the ribosomal stalk of the 50S ribosomal subunit. Interacts with L10 and the large rRNA to form the base of the stalk. L10 forms an elongated spine to which L12 dimers bind in a sequential fashion forming a multimeric L10(L12)X complex. One or more lysine residues are methylated.

Its function is as follows. Forms part of the ribosomal stalk which helps the ribosome interact with GTP-bound translation factors. This Streptococcus pyogenes serotype M1 protein is Large ribosomal subunit protein uL11.